A 508-amino-acid polypeptide reads, in one-letter code: Aldehyde dehydrogenase family 7 member A1 (508 aa).

Position 244–249 (glycine 244–glycine 249) interacts with NAD(+). Glutamate 266 (proton acceptor) is an active-site residue. The Nucleophile role is filled by cysteine 300.

The protein belongs to the aldehyde dehydrogenase family. Homotetramer.

It carries out the reaction an aldehyde + NAD(+) + H2O = a carboxylate + NADH + 2 H(+). In Pisum sativum (Garden pea), this protein is Aldehyde dehydrogenase family 7 member A1.